Consider the following 737-residue polypeptide: Catalase-peroxidase (737 aa).

A cross-link (tryptophyl-tyrosyl-methioninium (Trp-Tyr) (with M-245)) is located at residues 89 to 219 (WHSAGTYRVF…LAASHMGLIY (131 aa)). Histidine 90 acts as the Proton acceptor in catalysis. Residues 219–245 (YVNPEGPNGNPDPKAAARDIRVTFGRM) constitute a cross-link (tryptophyl-tyrosyl-methioninium (Tyr-Met) (with W-89)). Position 260 (histidine 260) interacts with heme b.

The protein belongs to the peroxidase family. Peroxidase/catalase subfamily. Homodimer or homotetramer. Requires heme b as cofactor. Post-translationally, formation of the three residue Trp-Tyr-Met cross-link is important for the catalase, but not the peroxidase activity of the enzyme.

Its subcellular location is the cytoplasm. The catalysed reaction is H2O2 + AH2 = A + 2 H2O. It carries out the reaction 2 H2O2 = O2 + 2 H2O. In terms of biological role, bifunctional enzyme with both catalase and broad-spectrum peroxidase activity. The chain is Catalase-peroxidase from Aspergillus terreus (strain NIH 2624 / FGSC A1156).